Consider the following 342-residue polypeptide: S-adenosyl-L-methionine-dependent tRNA 4-demethylwyosine synthase (342 aa).

[4Fe-4S] cluster-binding residues include Cys-45, Cys-58, Cys-71, Cys-81, Cys-85, and Cys-88. The Radical SAM core domain occupies 64–312 (YGIHSHRCLQ…VKHLPGYHIE (249 aa)).

The protein belongs to the TYW1 family. In terms of assembly, monomer. [4Fe-4S] cluster is required as a cofactor.

It is found in the cytoplasm. The enzyme catalyses N(1)-methylguanosine(37) in tRNA(Phe) + pyruvate + S-adenosyl-L-methionine = 4-demethylwyosine(37) in tRNA(Phe) + 5'-deoxyadenosine + L-methionine + CO2 + H2O. In terms of biological role, component of the wyosine derivatives biosynthesis pathway that catalyzes the condensation of N-methylguanine with 2 carbon atoms from pyruvate to form the tricyclic 4-demethylwyosine (imG-14) on guanosine-37 of tRNA(Phe). In Pyrococcus abyssi (strain GE5 / Orsay), this protein is S-adenosyl-L-methionine-dependent tRNA 4-demethylwyosine synthase.